Consider the following 628-residue polypeptide: Kinesin-like protein subito (628 aa).

Positions 28–68 are disordered; the sequence is RFRPRPNKKMRLFDNIQESEEESFSEYSDTESEYKYQSSEA. Over residues 44-58 the composition is skewed to acidic residues; the sequence is QESEEESFSEYSDTE. The Kinesin motor domain maps to 87 to 479; that stretch reads GPQVFLRLRP…LNFASIAKNI (393 aa). 169–176 contacts ATP; sequence GTSGSGKT. A coiled-coil region spans residues 509-612; it reads DYTKELEDEN…KNPASDTDIS (104 aa). Positions 596-628 are disordered; that stretch reads KDEIEELKNPASDTDISDDPNESKSPIEILDDD. A Phosphoserine modification is found at S607. A Phosphothreonine modification is found at T609. A Phosphoserine modification is found at S612.

This sequence belongs to the TRAFAC class myosin-kinesin ATPase superfamily. Kinesin family.

Its subcellular location is the cytoplasm. It localises to the cytoskeleton. In terms of biological role, required during female meiosis for bipolar spindle formation in the absence of the centrosomes and chromosome homolog segregation. Also has roles in male meiosis and mitotic divisions of the early embryo. This Drosophila melanogaster (Fruit fly) protein is Kinesin-like protein subito (sub).